Here is a 380-residue protein sequence, read N- to C-terminus: DNA replication and repair protein RecF (380 aa).

30 to 37 (GQNGQGKT) provides a ligand contact to ATP.

The protein belongs to the RecF family.

Its subcellular location is the cytoplasm. In terms of biological role, the RecF protein is involved in DNA metabolism; it is required for DNA replication and normal SOS inducibility. RecF binds preferentially to single-stranded, linear DNA. It also seems to bind ATP. This chain is DNA replication and repair protein RecF, found in Myxococcus xanthus (strain DK1622).